The primary structure comprises 493 residues: Inosine-5'-monophosphate dehydrogenase (493 aa).

2 consecutive CBS domains span residues 97–155 and 159–219; these read VIID…NAPI and MTSE…AKDE. NAD(+) contacts are provided by residues Asp-253 and 303–305; that span reads GIG. K(+) contacts are provided by Gly-305 and Gly-307. Ser-308 contributes to the IMP binding site. Cys-310 contacts K(+). Catalysis depends on Cys-310, which acts as the Thioimidate intermediate. Residues 343–345, 366–367, and 390–394 each bind IMP; these read DGG, GS, and YRGMG. Arg-406 serves as the catalytic Proton acceptor. Glu-421 lines the IMP pocket. K(+)-binding residues include Glu-475, Ser-476, and His-477.

Belongs to the IMPDH/GMPR family. In terms of assembly, homotetramer. K(+) serves as cofactor.

The enzyme catalyses IMP + NAD(+) + H2O = XMP + NADH + H(+). It participates in purine metabolism; XMP biosynthesis via de novo pathway; XMP from IMP: step 1/1. With respect to regulation, mycophenolic acid (MPA) is a non-competitive inhibitor that prevents formation of the closed enzyme conformation by binding to the same site as the amobile flap. In contrast, mizoribine monophosphate (MZP) is a competitive inhibitor that induces the closed conformation. MPA is a potent inhibitor of mammalian IMPDHs but a poor inhibitor of the bacterial enzymes. MZP is a more potent inhibitor of bacterial IMPDH. Its function is as follows. Catalyzes the conversion of inosine 5'-phosphate (IMP) to xanthosine 5'-phosphate (XMP), the first committed and rate-limiting step in the de novo synthesis of guanine nucleotides, and therefore plays an important role in the regulation of cell growth. This is Inosine-5'-monophosphate dehydrogenase from Streptococcus pyogenes serotype M1.